The sequence spans 184 residues: Probable RNA 2'-phosphotransferase (184 aa).

Belongs to the KptA/TPT1 family.

Functionally, removes the 2'-phosphate from RNA via an intermediate in which the phosphate is ADP-ribosylated by NAD followed by a presumed transesterification to release the RNA and generate ADP-ribose 1''-2''-cyclic phosphate (APPR&gt;P). May function as an ADP-ribosylase. The polypeptide is Probable RNA 2'-phosphotransferase (Escherichia coli O139:H28 (strain E24377A / ETEC)).